Here is a 170-residue protein sequence, read N- to C-terminus: Protein SprT (170 aa).

Residues 23 to 164 (QLARQHFSVE…CRQCGDKLKF (142 aa)) form the SprT-like domain. His-78 contributes to the Zn(2+) binding site. The active site involves Glu-79. His-82 contacts Zn(2+).

The protein belongs to the SprT family. It depends on Zn(2+) as a cofactor.

It is found in the cytoplasm. In Serratia proteamaculans (strain 568), this protein is Protein SprT.